Reading from the N-terminus, the 514-residue chain is Serine--tRNA ligase, cytoplasmic (514 aa).

M1 carries the post-translational modification N-acetylmethionine. Residues 9–61 (RVDKGGDPALIRESQEKRFKDPGLVDQLVKADSEWRRCRFRADNLNKLKNLCS) form an interaction with tRNA region. Residue S241 is modified to Phosphoserine. Residues T271 and R302 each contribute to the L-serine site. ATP is bound by residues 302–304 (RQE) and 318–321 (VHQF). Residue K323 is modified to N6-acetyllysine. Position 325 (E325) interacts with L-serine. Residue 391-394 (ELVS) coordinates ATP. N427 is a binding site for L-serine. The disordered stretch occupies residues 475 to 514 (PIDQEPSKKQKKQHEGSKKKGAARDVALESQLQNMEVTDA). The span at 479–501 (EPSKKQKKQHEGSKKKGAARDVA) shows a compositional bias: basic and acidic residues. A Nuclear localization signal motif is present at residues 482–494 (KKQKKQHEGSKKK). The segment covering 504–514 (SQLQNMEVTDA) has biased composition (polar residues).

Belongs to the class-II aminoacyl-tRNA synthetase family. Type-1 seryl-tRNA synthetase subfamily. As to quaternary structure, homodimer. The tRNA molecule may bind across the dimer. Interacts with SIRT2. Interacts with METTL6; interaction is required for the tRNA N(3)-methylcytidine methyltransferase activity of METTL6.

The protein resides in the cytoplasm. It localises to the nucleus. It carries out the reaction tRNA(Ser) + L-serine + ATP = L-seryl-tRNA(Ser) + AMP + diphosphate + H(+). It catalyses the reaction tRNA(Sec) + L-serine + ATP = L-seryl-tRNA(Sec) + AMP + diphosphate + H(+). It participates in aminoacyl-tRNA biosynthesis; selenocysteinyl-tRNA(Sec) biosynthesis; L-seryl-tRNA(Sec) from L-serine and tRNA(Sec): step 1/1. Functionally, catalyzes the attachment of serine to tRNA(Ser) in a two-step reaction: serine is first activated by ATP to form Ser-AMP and then transferred to the acceptor end of tRNA(Ser). Is probably also able to aminoacylate tRNA(Sec) with serine, to form the misacylated tRNA L-seryl-tRNA(Sec), which will be further converted into selenocysteinyl-tRNA(Sec). In the nucleus, binds to the VEGFA core promoter and prevents MYC binding and transcriptional activation by MYC. Recruits SIRT2 to the VEGFA promoter, promoting deacetylation of histone H4 at 'Lys-16' (H4K16). Thereby, inhibits the production of VEGFA and sprouting angiogenesis mediated by VEGFA. The chain is Serine--tRNA ligase, cytoplasmic (SARS1) from Bos taurus (Bovine).